A 49-amino-acid polypeptide reads, in one-letter code: Large ribosomal subunit protein bL33B (49 aa).

Belongs to the bacterial ribosomal protein bL33 family.

Functionally, plays a role in sporulation at high temperatures. This is Large ribosomal subunit protein bL33B (rpmGB) from Bacillus subtilis (strain 168).